A 745-amino-acid chain; its full sequence is A-kinase anchor protein 5 (745 aa).

The segment at 1-121 is disordered; that stretch reads METSVSEIQV…KKKAKSRLKF (121 aa). The essential to the intracellular anchoring function stretch occupies residues 1 to 164; the sequence is METSVSEIQV…EIKAQTQPDD (164 aa). Ser-4 and Ser-22 each carry phosphoserine. Cys-36 is lipidated: S-palmitoyl cysteine. Residues 37–50 show a composition bias toward basic residues; the sequence is FKRRKKANKTKPKA. Composition is skewed to basic and acidic residues over residues 54-63 and 90-100; these read TAEETKKHTP and SEPAKKQKPPE. The AKAP CaM-binding signature appears at 74-94; that stretch reads AGAWASIKGLVTHRKRSEPAK. Residue Cys-123 is the site of S-palmitoyl cysteine attachment. Over residues 162–175 the composition is skewed to polar residues; sequence PDDQAIQAGSTQGL. Disordered regions lie at residues 162–195 and 215–392; these read PDDQAIQAGSTQGLQEGVLVRDGKKSQESHISNS and AIQM…DHTE. Basic and acidic residues-rich tracts occupy residues 180-189 and 222-231; these read LVRDGKKSQE and ELEKETKVIT. Positions 234–268 are enriched in polar residues; that stretch reads PSVQTQRASLLESSAAGSPRSVTSAAPPSPATTHQ. Positions 285 to 300 are enriched in basic and acidic residues; it reads GKDDRRKTAAEEKKSG. A 1; approximate repeat occupies 304–312; sequence LGQAEEAAV. Positions 304–628 are 28 X 8 AA repeats of V-G-Q-A-E-E-A-T; sequence LGQAEEAAVG…PTVDQAEEAI (325 aa). One copy of the 2; approximate repeat lies at 320-327; the sequence is LSQAGEAT. One copy of the 3; approximate repeat lies at 328–335; the sequence is AGHPEEAT. A 4; approximate repeat occupies 348 to 355; that stretch reads LSQAEETT. The 5; approximate repeat unit spans residues 356-363; the sequence is VAQAKETV. A 6; approximate repeat occupies 364-395; the sequence is LSQAKEGELSQAKKATVGQAEEATIDHTEKVT. The 7; approximate repeat unit spans residues 420-436; that stretch reads LSQAKEATVVGQAEEAT. One copy of the 8; approximate repeat lies at 445–452; it reads VGQAEEAT. A run of 5 repeats spans residues 461 to 468, 469 to 476, 477 to 484, 485 to 492, and 493 to 500. A disordered region spans residues 466-560; sequence EATVGQAEEA…QAEEATVGQA (95 aa). The stretch at 501-508 is one 14; approximate repeat; the sequence is VGQAEEAT. The 15; approximate repeat unit spans residues 517 to 524; that stretch reads VDQAEEAT. Tandem repeats lie at residues 525–532, 533–540, 541–548, and 549–556. The span at 535-546 shows a compositional bias: basic and acidic residues; it reads HTEKVTVDHAEE. The 20; approximate repeat unit spans residues 557-564; that stretch reads VGQAEKVT. Residues 565 to 572 form repeat 21; that stretch reads VDHAEEAT. The 22; approximate repeat unit spans residues 573–580; the sequence is VGQAEEAT. The 23; approximate repeat unit spans residues 581 to 588; the sequence is VGQAEKVT. A 24; approximate repeat occupies 589 to 596; sequence VDHAEEAT. Repeat unit 25 spans residues 597–604; sequence VGQAEEAT. Residues 605 to 612 form a 26; approximate repeat; the sequence is VGQAEKVT. Residues 613–620 form a 27; approximate repeat; it reads VDQAEEPT. The interval 617 to 651 is disordered; it reads EEPTVDQAEEAISSHAPDLKENGIDTEKPRSEESK. Residues 621–628 form a 28; approximate repeat; the sequence is VDQAEEAI. Residues 633 to 651 are compositionally biased toward basic and acidic residues; the sequence is PDLKENGIDTEKPRSEESK. Positions 706-727 are RII-beta subunit binding domain; it reads YETLLIETASSLVKNAIELSVE. Residues 728 to 745 form a tethers NFATC2 to CRAC channels region; the sequence is QLVNEMVSEDNQINTLFQ.

Binding protein for dimer of the RII-beta regulatory subunit of cAMP-dependent protein kinase (PKA) and also for the protein kinase C (PKC) and the phosphatase calcineurin (PP2B). Each enzyme is inhibited when bound to the anchoring protein. Also binds the beta2-adrenergic receptor. Part of a complex containing AKAP5, ADCY5, ADCY6 and PDE4C. Interacts with ADCY8, and enhances its phosphorylation at lipid rafts. Interacts with ORAI1 (isoform alpha) (via N-terminus) upon store depletion and in response to LTC4. Does not interact with ORAI2 and ORAI3 paralogs. Interacts (via leucine zipper domain) with NFATC2/NFAT1. Interacts with calmodulin; the interaction is calcium-independent. Interacts with KCNQ2; the interaction may help KCNQ2 channel complex to retain calcium-bound calmodulin. Interacts with KCNK2; the channel is recruited to postsynaptic microdomains by AKAP5 where it can integrate neurotransmitter receptor signals. Part of a complex composed of AKAP5 and ADRB2. In terms of processing, palmitoylated. Palmitoylation at Cys-36 and Cys-123 play a key role in the targeting of AKAP5 to lipid rafts. Palmitoylation by ZDHHC2 is required for AKAP5 function in LTP-stimulated recycling endosome exocytosis.

Its subcellular location is the postsynaptic recycling endosome membrane. The protein localises to the cell projection. It localises to the dendrite. The protein resides in the postsynaptic cell membrane. Functionally, multivalent scaffold protein that anchors the cAMP-dependent protein kinase/PKA to cytoskeletal and/or organelle-associated proteins, targeting the signal carried by cAMP to specific intracellular effectors. Association with the beta2-adrenergic receptor (beta2-AR) not only regulates beta2-AR signaling pathway, but also the activation by PKA by switching off the beta2-AR signaling cascade. Plays a role in long term synaptic potentiation by regulating protein trafficking from the dendritic recycling endosomes to the plasma membrane and controlling both structural and functional plasticity at excitatory synapses. In hippocampal pyramidal neurons, recruits KCNK2/TREK-1 channel at postsynaptic dense bodies microdomains and converts it to a leak channel no longer sensitive to stimulation by arachidonic acid, acidic pH or mechanical stress, nor inhibited by Gq-coupled receptors but still under the negative control of Gs-coupled receptors. Associates with ORAI1 pore-forming subunit of CRAC channels in Ca(2+) signaling microdomains where it recruits NFATC2/NFAT1 and couples store-operated Ca(2+) influx to calmodulin and calcineurin signaling and activation of NFAT-dependent transcriptional responses. This chain is A-kinase anchor protein 5 (Akap5), found in Mus musculus (Mouse).